A 188-amino-acid chain; its full sequence is Elongation factor P (188 aa).

This sequence belongs to the elongation factor P family.

The protein resides in the cytoplasm. It functions in the pathway protein biosynthesis; polypeptide chain elongation. Functionally, involved in peptide bond synthesis. Stimulates efficient translation and peptide-bond synthesis on native or reconstituted 70S ribosomes in vitro. Probably functions indirectly by altering the affinity of the ribosome for aminoacyl-tRNA, thus increasing their reactivity as acceptors for peptidyl transferase. This is Elongation factor P from Mycoplasmoides gallisepticum (strain R(low / passage 15 / clone 2)) (Mycoplasma gallisepticum).